The sequence spans 425 residues: Serine--tRNA ligase (425 aa).

228-230 (TAE) serves as a coordination point for L-serine. 259 to 261 (RSE) provides a ligand contact to ATP. Glu282 contacts L-serine. Residue 346 to 349 (EIAS) participates in ATP binding. Residue Ser382 participates in L-serine binding.

Belongs to the class-II aminoacyl-tRNA synthetase family. Type-1 seryl-tRNA synthetase subfamily. As to quaternary structure, homodimer. The tRNA molecule binds across the dimer.

The protein resides in the cytoplasm. The enzyme catalyses tRNA(Ser) + L-serine + ATP = L-seryl-tRNA(Ser) + AMP + diphosphate + H(+). The catalysed reaction is tRNA(Sec) + L-serine + ATP = L-seryl-tRNA(Sec) + AMP + diphosphate + H(+). It participates in aminoacyl-tRNA biosynthesis; selenocysteinyl-tRNA(Sec) biosynthesis; L-seryl-tRNA(Sec) from L-serine and tRNA(Sec): step 1/1. Functionally, catalyzes the attachment of serine to tRNA(Ser). Is also able to aminoacylate tRNA(Sec) with serine, to form the misacylated tRNA L-seryl-tRNA(Sec), which will be further converted into selenocysteinyl-tRNA(Sec). This Rickettsia africae (strain ESF-5) protein is Serine--tRNA ligase.